Reading from the N-terminus, the 385-residue chain is Cytochrome b (385 aa).

Topologically, residues 1–27 (MRLLKSHPLLKLVNSYLIDASQPSNIS) are mitochondrial matrix. Tyr16 contributes to the a ubiquinone binding site. A helical membrane pass occupies residues 28-51 (YLWNFGSLLACCLIIQIVTGVTLA). Topologically, residues 52 to 74 (MHYSPNVLEAFNSIEHIMRDVNN) are mitochondrial intermembrane. Residues 75–102 (GWLVRYLHSNTASAFFFLVYLHIGRGMY) form a helical membrane-spanning segment. 2 residues coordinate heme b: His82 and His96. Residues 103–110 (YGSYRAPR) lie on the Mitochondrial matrix side of the membrane. A helical transmembrane segment spans residues 111-135 (TLVWAIGTVILILMMATAFLGYVLP). Topologically, residues 136–172 (YGQMSLWGATVITNLISAIPWIGQDIVEFIWGGFSVN) are mitochondrial intermembrane. A helical transmembrane segment spans residues 173–205 (NATLNRFFALHFVLPFILAALVLMHLIALHDTA). 2 residues coordinate heme b: His183 and His197. An a ubiquinone-binding site is contributed by His202. The Mitochondrial matrix segment spans residues 206 to 224 (GSSNPLGVSGNYDRITFAP). Residues 225–247 (YYLFKDLITIFIFIYVLSSFVFF) form a helical membrane-spanning segment. The Mitochondrial intermembrane portion of the chain corresponds to 248–288 (MPNVLGDSENYIMANPMQTPPAIVPEWYLLPFYAILRSIPN). The helical transmembrane segment at 289–309 (KLLGVIAMFSAILAIMLLPIT) threads the bilayer. Topologically, residues 310–320 (DLGRSKGLQFR) are mitochondrial matrix. The helical transmembrane segment at 321 to 341 (PLSKFAFWAFVVNFLILMKLG) threads the bilayer. The Mitochondrial intermembrane portion of the chain corresponds to 342–348 (ACHVESP). Residues 349–365 (FIELGQFSTIFYFSYFI) form a helical membrane-spanning segment. The Mitochondrial matrix segment spans residues 366 to 385 (FIVPVLSLIENTLVDLNYLK).

It belongs to the cytochrome b family. As to quaternary structure, component of the ubiquinol-cytochrome c oxidoreductase (cytochrome b-c1 complex, complex III, CIII), a multisubunit enzyme composed of 10 subunits. The complex is composed of 3 respiratory subunits cytochrome b (cob), cytochrome c1 (cyt-1) and Rieske protein (fes-1), 2 core protein subunits pep and ucr-1, and 5 low-molecular weight protein subunits qcr6, qcr7, qcr8, qcr9 and probably NCU16844/qcr10. The complex exists as an obligatory dimer and forms supercomplexes (SCs) in the inner mitochondrial membrane with NADH-ubiquinone oxidoreductase (complex I, CI) and cytochrome c oxidase (complex IV, CIV), resulting in different assemblies (supercomplexes SCI(1)III(2), SCIII(2)IV(1) and SCIII(2)IV(2) as well as higher order I(x)III(y)IV(z) megacomplexes). Heme b is required as a cofactor.

It is found in the mitochondrion inner membrane. The catalysed reaction is a quinol + 2 Fe(III)-[cytochrome c](out) = a quinone + 2 Fe(II)-[cytochrome c](out) + 2 H(+)(out). Component of the ubiquinol-cytochrome c oxidoreductase, a multisubunit transmembrane complex that is part of the mitochondrial electron transport chain which drives oxidative phosphorylation. The respiratory chain contains 3 multisubunit complexes succinate dehydrogenase (complex II, CII), ubiquinol-cytochrome c oxidoreductase (cytochrome b-c1 complex, complex III, CIII) and cytochrome c oxidase (complex IV, CIV), that cooperate to transfer electrons derived from NADH and succinate to molecular oxygen, creating an electrochemical gradient over the inner membrane that drives transmembrane transport and the ATP synthase. The cytochrome b-c1 complex catalyzes electron transfer from ubiquinol to cytochrome c, linking this redox reaction to translocation of protons across the mitochondrial inner membrane, with protons being carried across the membrane as hydrogens on the quinol. In the process called Q cycle, 2 protons are consumed from the matrix, 4 protons are released into the intermembrane space and 2 electrons are passed to cytochrome c. Cytochrome b is a catalytic core subunit containing 2 b-type hemes BL and BH topographically segregated in the quinone reduction (Qi) and quinol oxidation (Q0) sites on opposite sides of the membrane. This chain is Cytochrome b (cob), found in Neurospora crassa (strain ATCC 24698 / 74-OR23-1A / CBS 708.71 / DSM 1257 / FGSC 987).